Reading from the N-terminus, the 248-residue chain is Pathogenesis-related thaumatin-like protein 3.4 (248 aa).

Positions 1–25 (MARAILWVLLTVMAVSLLLHAGVEG) are cleaved as a signal peptide. 8 disulfide bridges follow: C34–C227, C75–C85, C90–C96, C141–C216, C146–C199, C154–C164, C168–C177, and C178–C186. N-linked (GlcNAc...) asparagine glycosylation occurs at N235.

This sequence belongs to the thaumatin family. In terms of tissue distribution, mainly expressed in male and female strobili, and, at lower levels, in roots of seedlings and saplings.

May be involved in disease resistance. In Cryptomeria japonica (Japanese cedar), this protein is Pathogenesis-related thaumatin-like protein 3.4.